The sequence spans 274 residues: Large ribosomal subunit protein uL2 (274 aa).

The segment at 221–274 (RGTAMNPVDHPHGGGEGKNFGKHPVTPWGVQTKGKKTRSNKRTDKFIVRRRSKK) is disordered.

This sequence belongs to the universal ribosomal protein uL2 family. Part of the 50S ribosomal subunit. Forms a bridge to the 30S subunit in the 70S ribosome.

One of the primary rRNA binding proteins. Required for association of the 30S and 50S subunits to form the 70S ribosome, for tRNA binding and peptide bond formation. It has been suggested to have peptidyltransferase activity; this is somewhat controversial. Makes several contacts with the 16S rRNA in the 70S ribosome. This is Large ribosomal subunit protein uL2 from Serratia proteamaculans (strain 568).